Here is a 446-residue protein sequence, read N- to C-terminus: NADH-ubiquinone oxidoreductase chain 4 (446 aa).

14 helical membrane passes run 4-24 (LILM…FWMV), 28-48 (LFVI…FVNI), 56-76 (VLSY…IVAS), 88-105 (LFLF…LTFS), 109-131 (LFMF…LGWG), 141-161 (VYLL…IFYL), 182-202 (LLYL…LVHL), 218-238 (ILAG…FSFL), 245-265 (YNYI…LVCL), 272-292 (ALIA…LMTL), 297-317 (LSGS…LFCL), 330-350 (LLIN…WFLL), 373-393 (IVSW…FSAA), and 426-446 (FLHW…LFWI).

Belongs to the complex I subunit 4 family.

It localises to the mitochondrion membrane. It carries out the reaction a ubiquinone + NADH + 5 H(+)(in) = a ubiquinol + NAD(+) + 4 H(+)(out). In terms of biological role, core subunit of the mitochondrial membrane respiratory chain NADH dehydrogenase (Complex I) that is believed to belong to the minimal assembly required for catalysis. Complex I functions in the transfer of electrons from NADH to the respiratory chain. The immediate electron acceptor for the enzyme is believed to be ubiquinone. The sequence is that of NADH-ubiquinone oxidoreductase chain 4 (ND4) from Ceratitis capitata (Mediterranean fruit fly).